The sequence spans 490 residues: Betaine aldehyde dehydrogenase (490 aa).

The K(+) site is built by Ile-27 and Asp-93. 150-152 (GAW) serves as a coordination point for NAD(+). The active-site Charge relay system is Lys-162. 176 to 179 (KPSE) serves as a coordination point for NAD(+). Val-180 serves as a coordination point for K(+). 230–233 (GTDT) lines the NAD(+) pocket. A K(+)-binding site is contributed by Leu-246. Glu-252 acts as the Proton acceptor in catalysis. NAD(+) contacts are provided by Gly-254, Cys-286, and Glu-387. Cys-286 functions as the Nucleophile in the catalytic mechanism. Cysteine sulfenic acid (-SOH) is present on Cys-286. Positions 457 and 460 each coordinate K(+). The Charge relay system role is filled by Glu-464.

Belongs to the aldehyde dehydrogenase family. As to quaternary structure, dimer of dimers. K(+) is required as a cofactor.

The enzyme catalyses betaine aldehyde + NAD(+) + H2O = glycine betaine + NADH + 2 H(+). It functions in the pathway amine and polyamine biosynthesis; betaine biosynthesis via choline pathway; betaine from betaine aldehyde: step 1/1. In terms of biological role, involved in the biosynthesis of the osmoprotectant glycine betaine. Catalyzes the irreversible oxidation of betaine aldehyde to the corresponding acid. The protein is Betaine aldehyde dehydrogenase of Pseudomonas fluorescens (strain Pf0-1).